Here is a 342-residue protein sequence, read N- to C-terminus: Putative glycosyltransferases (342 aa).

2 consecutive transmembrane segments (helical) span residues 227 to 247 (IFYL…YLII) and 262 to 282 (VIVS…LVGI).

This sequence belongs to the glycosyltransferase 2 family.

It localises to the cell membrane. May play only a redundant role in maintaining cell wall viability and bacterial virulence. In Mycobacterium tuberculosis (strain CDC 1551 / Oshkosh), this protein is Putative glycosyltransferases (pimF).